We begin with the raw amino-acid sequence, 74 residues long: Conotoxin MiEr93 (74 aa).

Positions 1-22 (MKLTCVLIIAVLFLTAYQLATA) are cleaved as a signal peptide. A propeptide spanning residues 23 to 45 (ASYAKGKQKHRALRPADKHLRLT) is cleaved from the precursor. 3 cysteine pairs are disulfide-bonded: C48-C62, C55-C66, and C61-C73.

The protein belongs to the conotoxin O1 superfamily. Expressed by the venom duct.

The protein localises to the secreted. The protein is Conotoxin MiEr93 of Conus miles (Soldier cone).